We begin with the raw amino-acid sequence, 473 residues long: Argininosuccinate lyase (473 aa).

This sequence belongs to the lyase 1 family. Argininosuccinate lyase subfamily.

The protein resides in the cytoplasm. It catalyses the reaction 2-(N(omega)-L-arginino)succinate = fumarate + L-arginine. Its pathway is amino-acid biosynthesis; L-arginine biosynthesis; L-arginine from L-ornithine and carbamoyl phosphate: step 3/3. In Streptomyces clavuligerus, this protein is Argininosuccinate lyase.